Reading from the N-terminus, the 397-residue chain is Odorant receptor 22b (397 aa).

The Cytoplasmic portion of the chain corresponds to 1–49; it reads MLSQFFPHIKEKPLSERVKSRDAFVYLDRVMWSFGWTVPENKRWDLHYK. A helical transmembrane segment spans residues 50 to 70; sequence LWSTFVTLLIFILLPISVSVE. At 71–85 the chain is on the extracellular side; that stretch reads YIQRFKTFSAGEFLS. A helical transmembrane segment spans residues 86–105; that stretch reads SIQIGVNMYGSSFKSYLTMM. Residues 106–143 lie on the Cytoplasmic side of the membrane; sequence GYKKRQEAKMSLDELDKRCVCDEERTIVHRHVALGNFC. The helical transmembrane segment at 144 to 164 threads the bilayer; the sequence is YIFYHIAYTSFLISNFLSFIM. The Extracellular portion of the chain corresponds to 165–194; the sequence is KRIHAWRMYFPYVDPEKQFYISSIAEVILR. The chain crosses the membrane as a helical span at residues 195–215; that stretch reads GWAVFMDLCTDVCPLISMVIA. Residues 216-268 lie on the Cytoplasmic side of the membrane; sequence RCHITLLKQRLRNLRSEPGRTEDEYLKELADCVRDHRLILDYVDALRSVFSGT. Residues 269 to 289 form a helical membrane-spanning segment; it reads IFVQFLLIGIVLGLSMINIMF. Over 290–295 the chain is Extracellular; the sequence is FSTLST. A helical transmembrane segment spans residues 296-316; that stretch reads GVAVVLFMSCVSMQTFPFCYL. Residues 317–347 lie on the Cytoplasmic side of the membrane; sequence CNMIMDDCQEMADSLFQSDWTSADRRYKSTL. The helical transmembrane segment at 348–368 threads the bilayer; it reads VYFLHNLQQPIILTAGGVFPI. Topologically, residues 369–397 are extracellular; the sequence is SMQTNLNMVKLAFTVVTIVKQFNLAEKFQ.

The protein belongs to the insect chemoreceptor superfamily. Heteromeric odorant receptor channel (TC 1.A.69) family. Or2a subfamily. In terms of assembly, interacts with Orco, via conserved C-terminal cytoplasmic loops. Complexes exist early in the endomembrane system in olfactory sensory neurons (OSNs), coupling these complexes to the conserved ciliary trafficking pathway. In terms of tissue distribution, expressed with Orco in 20-22 sensory neurons on the medial-proximal edge of the antenna. This expression pattern matches the distribution of the large sensilla basiconica. Expression is first seen at 60 hours APF in a subset of cells restricted to a subregion of the developing antenna. Expression continues throughout antennal development. Expressed in the ab3A neuron which responds to ethyl butyrate.

It localises to the cell membrane. In terms of biological role, odorant receptor which mediates acceptance or avoidance behavior, depending on its substrates. The odorant receptor repertoire encodes a large collection of odor stimuli that vary widely in identity, intensity, and duration. Involved in the behavioral responses to esters. Complexes with Orco to form odorant-sensing units, providing sensitive and prolonged odorant signaling and calcium permeability. They are necessary and sufficient to promote functional reconstitution of odor-evoked signaling in sensory neurons that normally respond only to carbon dioxide. This Drosophila melanogaster (Fruit fly) protein is Odorant receptor 22b (Or22b).